Here is an 87-residue protein sequence, read N- to C-terminus: Small ribosomal subunit protein bS20 (87 aa).

The tract at residues 1-26 is disordered; the sequence is MANIKSAKKRAVQSEKARKHNASRRS.

The protein belongs to the bacterial ribosomal protein bS20 family.

Functionally, binds directly to 16S ribosomal RNA. This is Small ribosomal subunit protein bS20 from Salmonella typhi.